The primary structure comprises 49 residues: Large ribosomal subunit protein bL33A (49 aa).

Belongs to the bacterial ribosomal protein bL33 family.

This chain is Large ribosomal subunit protein bL33A, found in Limosilactobacillus reuteri subsp. reuteri (strain JCM 1112) (Lactobacillus reuteri).